The primary structure comprises 247 residues: Acidic leucine-rich nuclear phosphoprotein 32 family member A (247 aa).

Position 15 is a phosphothreonine (Thr15). Residue Ser17 is modified to Phosphoserine. LRR repeat units lie at residues 18-41 (DVKE…TDEF), 43-64 (ELEF…PKLN), 65-87 (KLKK…AEKC), and 89-110 (NLKH…EPLK). The LRRCT domain occupies 123-161 (CEVTNLNAYRENVFKLLPQVMYLDGYDRDNKEAPDSDVE). The interval 150–172 (RDNKEAPDSDVEGYVEDDDEEDE) is necessary for tumor-suppressive function. Residues 150-247 (RDNKEAPDSD…EPDDEGQEDD (98 aa)) are disordered. Over residues 157–230 (DSDVEGYVED…EDEEDAAEEE (74 aa)) the composition is skewed to acidic residues. Ser158 and Ser202 each carry phosphoserine. Residues 165-247 (EDDDEEDEDE…EPDDEGQEDD (83 aa)) form an interaction with E4F1 region.

Belongs to the ANP32 family. In terms of assembly, component of the SET complex, composed of at least ANP32A, APEX1, HMGB2, NME1, SET and TREX1. Directly interacts with SET. Interacts with ATXN1/SCA1. Interacts with MAP1B. Interacts with ELAVL1. Part of the INHAT (inhibitor of histone acetyltransferases) complex. Interacts with E4F1. Phosphorylated on serine residues, at least in part by casein kinase 2/CK2. Post-translationally, some glutamate residues are glycylated by TTLL8. This modification occurs exclusively on glutamate residues and results in a glycine chain on the gamma-carboxyl group. As to expression, widely distributed in the central nervous system, with an abundant expression in the cerebellum.

The protein resides in the nucleus. Its subcellular location is the cytoplasm. It localises to the endoplasmic reticulum. In terms of biological role, multifunctional protein that is involved in the regulation of many processes including tumor suppression, apoptosis, cell cycle progression or transcription. Promotes apoptosis by favouring the activation of caspase-9/CASP9 and allowing apoptosome formation. In addition, plays a role in the modulation of histone acetylation and transcription as part of the INHAT (inhibitor of histone acetyltransferases) complex. Inhibits the histone-acetyltranferase activity of EP300/CREBBP (CREB-binding protein) and EP300/CREBBP-associated factor by histone masking. Preferentially binds to unmodified histone H3 and sterically inhibiting its acetylation and phosphorylation leading to cell growth inhibition. Participates in other biochemical processes such as regulation of mRNA nuclear-to-cytoplasmic translocation and stability by its association with ELAVL1 (Hu-antigen R). Plays a role in E4F1-mediated transcriptional repression as well as inhibition of protein phosphatase 2A. This is Acidic leucine-rich nuclear phosphoprotein 32 family member A (Anp32a) from Rattus norvegicus (Rat).